The sequence spans 747 residues: Tegument protein UL46 homolog (747 aa).

Disordered stretches follow at residues 437–484 (FCCP…SPRT), 525–593 (QRSD…DYMR), 611–665 (TPYM…PEVV), and 689–747 (SASR…VSSL). Residues 465-484 (LRSSRQLPTSPPSNIVSPRT) are compositionally biased toward polar residues. Low complexity predominate over residues 528–540 (DSSSSDNSTCSST). Over residues 541–553 (ETQYITLPSTPSP) the composition is skewed to polar residues. Composition is skewed to basic and acidic residues over residues 707-724 (VCRERDEESAEPRHDGFI) and 736-747 (KHPDQTERVSSL).

The protein belongs to the herpesviridae HHV-1 VP11/12 protein family.

It localises to the virion tegument. It is found in the host cell membrane. Functionally, modulates alpha trans-inducing factor-dependent activation of alpha genes. The polypeptide is Tegument protein UL46 homolog (Equine herpesvirus 1 (strain Ab4p) (EHV-1)).